A 386-amino-acid polypeptide reads, in one-letter code: Putative nickel insertion protein (386 aa).

This sequence belongs to the LarC family.

The chain is Putative nickel insertion protein from Dictyoglomus thermophilum (strain ATCC 35947 / DSM 3960 / H-6-12).